The primary structure comprises 534 residues: Dolichol kinase (534 aa).

Residues 1–16 lie on the Cytoplasmic side of the membrane; it reads MTRQCPPQESGAALSG. A helical transmembrane segment spans residues 17–37; that stretch reads SVLAEAAVVFAVVLSIHAAVW. The Extracellular portion of the chain corresponds to 38 to 72; it reads DRYSWCAVALAVQAFYVQYKWDRLLQQGNAVFQFR. A helical transmembrane segment spans residues 73–93; it reads MSANSGLLPASMVMPLLGLVM. Residues 94-109 are Cytoplasmic-facing; that stretch reads KERCQTAGNPYFERFG. The chain crosses the membrane as a helical span at residues 110–130; it reads IVVAATGMAVALFSSVLALGI. Topologically, residues 131-132 are extracellular; the sequence is TR. Residues 133 to 153 form a helical membrane-spanning segment; that stretch reads PVPTNTCAISGLAGGVIIYIM. Over 154–161 the chain is Cytoplasmic; it reads RHSLSVGE. A helical transmembrane segment spans residues 162–182; it reads VIEVLEVLLIFVYLNMILLYL. Over 183–186 the chain is Extracellular; sequence LPRC. A helical transmembrane segment spans residues 187 to 207; it reads FTPGEALLVLGGISFVLNQLI. The Cytoplasmic segment spans residues 208–220; sequence KRSLTESQGDPVD. Residues 221-241 traverse the membrane as a helical segment; sequence FFLLVVVVGMVLMGVFFSTLF. Residues 242–252 lie on the Extracellular side of the membrane; sequence VFMDSGTWASS. A helical transmembrane segment spans residues 253–273; that stretch reads IFFHLMTCVLGLGVVLPWLHW. The Cytoplasmic segment spans residues 274 to 293; that stretch reads LIRRNPLLWLLQFLFYTETR. Residues 294 to 314 form a helical membrane-spanning segment; the sequence is IYLLAYWSLLASVACLVVLYQ. Topologically, residues 315-333 are extracellular; that stretch reads NAKRSSSESKKHRAPTITR. A helical transmembrane segment spans residues 334-350; the sequence is KYFHFIVVATYIPGIIF. Topologically, residues 351 to 355 are cytoplasmic; sequence DRPLL. A helical membrane pass occupies residues 356–376; it reads YVAATVCLAVFIFLEYVRYFR. Over 377–397 the chain is Extracellular; it reads IKPLGHTLRSLLSLFLDERDS. Residues 398–418 traverse the membrane as a helical segment; it reads GPLILTHIYLLLGMSLPIWLI. Over 419–432 the chain is Cytoplasmic; it reads PRPCTQKDSLEGAR. A helical membrane pass occupies residues 433–453; it reads ALVPYAGVLAVGVGDTVASIF. Over 454–468 the chain is Extracellular; the sequence is GSTMGEIRWPGTKKT. Positions 455–470 are CTP-binding; sequence STMGEIRWPGTKKTFE. A helical transmembrane segment spans residues 469–489; it reads FEGTMTSIFAQIISVALILIF. Topologically, residues 490-491 are cytoplasmic; it reads DS. Residues 492 to 512 traverse the membrane as a helical segment; it reads GVDLNYSYAWILGSISTVSLL. Residues 513-534 are Extracellular-facing; that stretch reads EAYTTQIDNLLLPLYLLILLMA.

The protein belongs to the polyprenol kinase family.

The protein resides in the endoplasmic reticulum membrane. It catalyses the reaction a di-trans,poly-cis-dolichol + CTP = a di-trans,poly-cis-dolichyl phosphate + CDP + H(+). It functions in the pathway protein modification; protein glycosylation. Its function is as follows. Catalyzes CTP-mediated phosphorylation of dolichol, the terminal step in de novo dolichyl monophosphate (Dol-P) biosynthesis. Dol-P is a lipid carrier essential for the synthesis of N-linked and O-linked oligosaccharides and for GPI anchors. This chain is Dolichol kinase, found in Mus musculus (Mouse).